Reading from the N-terminus, the 942-residue chain is Protein translocase subunit SecA (942 aa).

Residues Gln-90, 108 to 112 (GEGKT), and Asp-509 each bind ATP.

It belongs to the SecA family. Monomer and homodimer. Part of the essential Sec protein translocation apparatus which comprises SecA, SecYEG and auxiliary proteins SecDF. Other proteins may also be involved.

Its subcellular location is the cell inner membrane. It localises to the cellular thylakoid membrane. The protein localises to the cytoplasm. The enzyme catalyses ATP + H2O + cellular proteinSide 1 = ADP + phosphate + cellular proteinSide 2.. Its function is as follows. Part of the Sec protein translocase complex. Interacts with the SecYEG preprotein conducting channel. Has a central role in coupling the hydrolysis of ATP to the transfer of proteins into and across the cell membrane, serving as an ATP-driven molecular motor driving the stepwise translocation of polypeptide chains across the membrane. Functionally, probably participates in protein translocation into and across both the cytoplasmic and thylakoid membranes in cyanobacterial cells. This is Protein translocase subunit SecA from Prochlorococcus marinus (strain NATL2A).